A 178-amino-acid polypeptide reads, in one-letter code: Large ribosomal subunit protein uL6 (178 aa).

This sequence belongs to the universal ribosomal protein uL6 family. Part of the 50S ribosomal subunit.

Functionally, this protein binds to the 23S rRNA, and is important in its secondary structure. It is located near the subunit interface in the base of the L7/L12 stalk, and near the tRNA binding site of the peptidyltransferase center. The sequence is that of Large ribosomal subunit protein uL6 from Helicobacter pylori (strain Shi470).